A 683-amino-acid chain; its full sequence is Leucine zipper putative tumor suppressor 2 homolog (683 aa).

Disordered regions lie at residues 1 to 37, 82 to 107, and 262 to 320; these read MAAL…TMGS, YSSQ…NNGN, and MGHI…CDRS. Polar residues-rich tracts occupy residues 11–37 and 96–107; these read IDQN…TMGS and KPSTTTSGNNGN. The segment covering 290-308 has biased composition (low complexity); that stretch reads SDSGRSSSSKSTGSLSGRG. A coiled-coil region spans residues 324 to 665; sequence SDEILIRELE…LELEARELDE (342 aa).

This sequence belongs to the LZTS2 family.

It is found in the cytoplasm. The protein resides in the cytoskeleton. The protein localises to the microtubule organizing center. Its subcellular location is the centrosome. In terms of biological role, negative regulator of katanin-mediated microtubule severing and release from the centrosome. Required for central spindle formation and the completion of cytokinesis. Negative regulator of the Wnt signaling pathway. Represses beta-catenin-mediated transcriptional activation by promoting the nuclear exclusion of beta-catenin. The sequence is that of Leucine zipper putative tumor suppressor 2 homolog (lzts2) from Xenopus tropicalis (Western clawed frog).